Consider the following 67-residue polypeptide: Alpha-conotoxin-like Pu1.1 (67 aa).

The first 21 residues, 1–21, serve as a signal peptide directing secretion; that stretch reads MGMRMMFTVFLLVVLATTVVS. A propeptide spanning residues 22 to 46 is cleaved from the precursor; sequence FTSDRTSDGRNAAFNAFDLIALTAR. At Gln-47 the chain carries Pyrrolidone carboxylic acid. Intrachain disulfides connect Cys-49–Cys-55 and Cys-50–Cys-63. A lacks the Ser-Xaa-Pro motif that is crucial for potent interaction with nAChR region spans residues 51-53; sequence NVP. Position 63 is a cysteine amide (Cys-63).

Belongs to the conotoxin A superfamily. As to expression, expressed by the venom duct.

It localises to the secreted. Alpha-conotoxins act on postsynaptic membranes, they bind to the nicotinic acetylcholine receptors (nAChR) and thus inhibit them. Has possibly a distinct nAChR binding mode from other alpha-conotoxins, due to a different three residue motif (lacks the Ser-Xaa-Pro motif). The sequence is that of Alpha-conotoxin-like Pu1.1 from Conus pulicarius (Flea-bitten cone).